The following is a 219-amino-acid chain: Thiamine-phosphate synthase (219 aa).

4-amino-2-methyl-5-(diphosphooxymethyl)pyrimidine contacts are provided by residues 44–48 and Asn79; that span reads QLREK. Asp80 and Asp99 together coordinate Mg(2+). Ser117 is a binding site for 4-amino-2-methyl-5-(diphosphooxymethyl)pyrimidine. 143 to 145 serves as a coordination point for 2-[(2R,5Z)-2-carboxy-4-methylthiazol-5(2H)-ylidene]ethyl phosphate; it reads TST. Lys146 contacts 4-amino-2-methyl-5-(diphosphooxymethyl)pyrimidine. Residues Gly175 and 195–196 each bind 2-[(2R,5Z)-2-carboxy-4-methylthiazol-5(2H)-ylidene]ethyl phosphate; that span reads IS.

It belongs to the thiamine-phosphate synthase family. Requires Mg(2+) as cofactor.

It carries out the reaction 2-[(2R,5Z)-2-carboxy-4-methylthiazol-5(2H)-ylidene]ethyl phosphate + 4-amino-2-methyl-5-(diphosphooxymethyl)pyrimidine + 2 H(+) = thiamine phosphate + CO2 + diphosphate. It catalyses the reaction 2-(2-carboxy-4-methylthiazol-5-yl)ethyl phosphate + 4-amino-2-methyl-5-(diphosphooxymethyl)pyrimidine + 2 H(+) = thiamine phosphate + CO2 + diphosphate. The enzyme catalyses 4-methyl-5-(2-phosphooxyethyl)-thiazole + 4-amino-2-methyl-5-(diphosphooxymethyl)pyrimidine + H(+) = thiamine phosphate + diphosphate. Its pathway is cofactor biosynthesis; thiamine diphosphate biosynthesis; thiamine phosphate from 4-amino-2-methyl-5-diphosphomethylpyrimidine and 4-methyl-5-(2-phosphoethyl)-thiazole: step 1/1. Condenses 4-methyl-5-(beta-hydroxyethyl)thiazole monophosphate (THZ-P) and 2-methyl-4-amino-5-hydroxymethyl pyrimidine pyrophosphate (HMP-PP) to form thiamine monophosphate (TMP). This Bacillus mycoides (strain KBAB4) (Bacillus weihenstephanensis) protein is Thiamine-phosphate synthase.